A 378-amino-acid chain; its full sequence is MAGSYPEGAPAILADKRQQFGSRFLSDPARVFHHNAWDNVEWSEEQAAAAERKVQENSIQRVCQEKQVDYEINAHKYWNDFYKIHENGFFKDRHWLFTEFPELAPSQNQNHLKDWFLENKSEVCECRNNEDGPGLIMEEQHKCSSKSLEHKTQTPPVEENVTQKISDLEICADEFPGSSATYRILEVGCGVGNTVFPILQTNNDPGLFVYCCDFSSTAIELVQTNSEYDPSRCFAFVHDLCDEEKSYPVPKGSLDIIILIFVLSAVVPDKMQKAINRLSRLLKPGGMVLLRDYGRYDMAQLRFKKGQCLSGNFYVRGDGTRVYFFTQEELDTLFTTAGLEKVQNLVDRRLQVNRGKQLTMYRVWIQCKYCKPLLSSTS.

Ala2 is subject to N-acetylalanine. A Phosphoserine modification is found at Ser4. Trp78 and Tyr82 together coordinate S-adenosyl-L-methionine. Thr154 carries the phosphothreonine modification. Residues Gly188, Asp213, Asp239, Leu240, and Ile260 each coordinate S-adenosyl-L-methionine.

The protein belongs to the methyltransferase superfamily. METL family. Monomer. Interacts with DALRD3.

The protein resides in the cytoplasm. It catalyses the reaction cytidine(32) in tRNA(Thr) + S-adenosyl-L-methionine = N(3)-methylcytidine(32) in tRNA(Thr) + S-adenosyl-L-homocysteine + H(+). It carries out the reaction cytidine(32) in tRNA(Arg)(CCU) + S-adenosyl-L-methionine = N(3)-methylcytidine(32) in tRNA(Arg)(CCU) + S-adenosyl-L-homocysteine + H(+). Its function is as follows. S-adenosyl-L-methionine-dependent methyltransferase that mediates N(3)-methylcytidine modification of residue 32 of the tRNA anticodon loop of tRNA(Thr)(UGU) and tRNA(Arg)(CCU). In Homo sapiens (Human), this protein is tRNA N(3)-cytidine methyltransferase METTL2B.